We begin with the raw amino-acid sequence, 258 residues long: Ribosomal RNA large subunit methyltransferase E (258 aa).

5 residues coordinate S-adenosyl-L-methionine: Gly58, Trp60, Asp78, Asp96, and Asp120. The Proton acceptor role is filled by Lys160.

The protein belongs to the class I-like SAM-binding methyltransferase superfamily. RNA methyltransferase RlmE family.

The protein localises to the cytoplasm. The catalysed reaction is uridine(2552) in 23S rRNA + S-adenosyl-L-methionine = 2'-O-methyluridine(2552) in 23S rRNA + S-adenosyl-L-homocysteine + H(+). In terms of biological role, specifically methylates the uridine in position 2552 of 23S rRNA at the 2'-O position of the ribose in the fully assembled 50S ribosomal subunit. The polypeptide is Ribosomal RNA large subunit methyltransferase E (Methanococcus maripaludis (strain DSM 14266 / JCM 13030 / NBRC 101832 / S2 / LL)).